Consider the following 1280-residue polypeptide: Ankyrin repeat and sterile alpha motif domain-containing protein 1B (1280 aa).

ANK repeat units follow at residues 2 to 31 (GKEQ…GLLG), 57 to 86 (SGYT…STNV), 90 to 119 (KGCF…SHSR), 126 to 155 (EKET…DPSM), 159 to 188 (RGET…NLMS), 192 to 221 (RKHT…DVNT), and 224 to 253 (EKGS…DANI). Disordered stretches follow at residues 299 to 322 (RHRP…LRHK), 361 to 399 (MESF…EEKS), 479 to 573 (SVSD…STGS), 704 to 723 (NGEA…SNTG), and 755 to 791 (SNLV…PSFT). A compositionally biased stretch (basic and acidic residues) spans 482-491 (DAERGNHGDD). 3 stretches are compositionally biased toward polar residues: residues 520 to 550 (KQRT…SSLG), 707 to 723 (ARSN…SNTG), and 770 to 782 (SRGQ…SSPS). SAM domains lie at 824 to 890 (CPVQ…LPRV) and 898 to 963 (NNPT…RLHE). 2 disordered regions span residues 960-994 (RLHE…LSQA) and 1208-1243 (GSST…MDQK). The span at 980–994 (GNHTPPQLSPSLSQA) shows a compositional bias: polar residues. The PID domain occupies 1071–1223 (IFQSCDYEAY…ESFDSKPSKP (153 aa)).

It is found in the cytoplasm. The chain is Ankyrin repeat and sterile alpha motif domain-containing protein 1B (anks1b) from Danio rerio (Zebrafish).